We begin with the raw amino-acid sequence, 382 residues long: MFLKAVVLTLSLVAVTGAQAEVSANQVATVVWDYFSQLSNNAKEAVEHLQKSELTQQLNALFQDKIGQVNTYTDNLQKKLVPFATELHERLRKDSEKLKEEIRKELEELRARLLPHADEVSRKIGDNMHELQQRLGPYAEELRTQVNTHAERLRNQLTAHAQSLETTLRQNVDNLQASLTPYADELKAKIDQNVEELKGHLTPYADELKVKIDQNVEDLRRSLAPYAQDVQEKLNHQLEGLAFQMKKNAEELKAKISANADELRQKLVPVAEVVRGKLRDNTEELQKSLAELSSHLDRQVEEFRRNVGPYGETFNKALLQQVEELRQKLGPYAGDVEDHLSFLEKDLRDKVNSFFSTLEEKENQDMLVAVPELQLTPVPLES.

An N-terminal signal peptide occupies residues 1–20 (MFLKAVVLTLSLVAVTGAQA). 13 tandem repeats follow at residues 33-54 (DYFS…KSEL), 60-81 (ALFQ…KKLV), 82-103 (PFAT…EEIR), 115-136 (PHAD…QRLG), 137-158 (PYAE…NQLT), 159-180 (AHAQ…ASLT), 181-202 (PYAD…GHLT), 203-224 (PYAD…RSLA), 225-246 (PYAQ…FQMK), 247-268 (KNAE…QKLV), 269-286 (PVAE…EELQ), 287-308 (KSLA…RNVG), and 309-330 (PYGE…QKLG). The tract at residues 33–330 (DYFSQLSNNA…QVEELRQKLG (298 aa)) is 13 X 22 AA approximate tandem repeats.

This sequence belongs to the apolipoprotein A1/A4/E family. In terms of assembly, homodimer. Post-translationally, phosphorylation sites are present in the extracellular medium.

It is found in the secreted. May have a role in chylomicrons and VLDL secretion and catabolism. Required for efficient activation of lipoprotein lipase by ApoC-II; potent activator of LCAT. Apoa-IV is a major component of HDL and chylomicrons. The protein is Apolipoprotein A-IV (APOA4) of Neomonachus schauinslandi (Hawaiian monk seal).